A 262-amino-acid chain; its full sequence is MASFGWKRRIGEKVSKATSQQFEAEAADEKDAAENEDGNWLQASKRRKETLQEGCKQRSQQLKDEGAQLAENKRYKEAIQKWDEALQLTPGDATLYEMKSQVLLSLHEMFPAVHAAEMAVKRNPHSWEAWQTLGRAQLGLGEIVLAIRSFQIALHIYPMNPELWKEDLSWARKLQEQQKVAQRIENKEMPPEGPDLSPGSIPDYDFESDEIVAVCAAVAEKQKSVSANKTMVIVSASGTVEIVNEKEEGSSTPDGSVFIKAR.

The segment at 17 to 63 (ATSQQFEAEAADEKDAAENEDGNWLQASKRRKETLQEGCKQRSQQLK) is disordered. TPR repeat units follow at residues 59–92 (SQQL…TPGD), 93–126 (ATLY…NPHS), and 127–160 (WEAW…YPMN). A Phosphoserine modification is found at Ser197.

This Mus musculus (Mouse) protein is Tetratricopeptide repeat protein 33 (Ttc33).